The sequence spans 290 residues: MKPPEHSLIIISGLSGSGKSVALKTFEDLDYYCSDNLPVELLPHFLRCRLRVAELSDQRIAIGIDIRSGSNLSELDQWRHTAKHYNIKAHLLFFEASNETLLKRYADTRRRHPLSHLGLSLPEAIALERELTAPLREAAEAVIDTSTFNVHQLRRHVVTEFALTHSDKLSLLFESFAYKRGVPTEADFVFDARILPNPHWEPELRSLTGRDSNVRDYMEQQPDVILYLRQITEFLDTWLARLQADTRSYVTVAFGCTGGKHRSVYLAEQMARHAREKGWSEVATFHRELE.

13-20 is an ATP binding site; sequence GLSGSGKS. GTP is bound at residue 65-68; that stretch reads DIRS.

Belongs to the RapZ-like family.

Functionally, displays ATPase and GTPase activities. In Xylella fastidiosa (strain 9a5c), this protein is Nucleotide-binding protein XF_1405.